A 104-amino-acid polypeptide reads, in one-letter code: L-rhamnose mutarotase (104 aa).

Position 18 (Y18) interacts with substrate. H22 (proton donor) is an active-site residue. Substrate is bound by residues Y41 and W76–W77.

This sequence belongs to the rhamnose mutarotase family. As to quaternary structure, homodimer.

It localises to the cytoplasm. It carries out the reaction alpha-L-rhamnose = beta-L-rhamnose. It functions in the pathway carbohydrate metabolism; L-rhamnose metabolism. Its function is as follows. Involved in the anomeric conversion of L-rhamnose. The protein is L-rhamnose mutarotase of Phocaeicola vulgatus (strain ATCC 8482 / DSM 1447 / JCM 5826 / CCUG 4940 / NBRC 14291 / NCTC 11154) (Bacteroides vulgatus).